We begin with the raw amino-acid sequence, 153 residues long: Ribosome maturation factor RimP (153 aa).

Belongs to the RimP family.

Its subcellular location is the cytoplasm. Functionally, required for maturation of 30S ribosomal subunits. In Clostridium botulinum (strain Alaska E43 / Type E3), this protein is Ribosome maturation factor RimP.